Here is a 264-residue protein sequence, read N- to C-terminus: Somatomedin-B and thrombospondin type-1 domain-containing protein (264 aa).

The signal sequence occupies residues 1–20 (MRTLWMALCVLARLWPGALA). The SMB domain occupies 24 to 75 (DAGRCCPGRDPACFASGWRQDRVYGTCFCDQACRLTGDCCFDYARACPARPC). Disulfide bonds link Cys-28-Cys-36, Cys-28-Cys-52, Cys-36-Cys-70, Cys-50-Cys-52, Cys-50-Cys-63, Cys-56-Cys-62, and Cys-63-Cys-70. One can recognise a TSP type-1 domain in the interval 74-127 (PCIVGEWSPWSGCASQCRPTARVRRRAVQQEPQNGGEPCPALEERAGCLEYATP). A glycan (N-linked (GlcNAc...) asparagine) is linked at Asn-227.

The protein belongs to the thrombospondin family.

It localises to the secreted. It is found in the extracellular space. The protein localises to the extracellular matrix. This Bos taurus (Bovine) protein is Somatomedin-B and thrombospondin type-1 domain-containing protein (SBSPON).